We begin with the raw amino-acid sequence, 439 residues long: uncharacterized protein (439 aa).

28 to 35 contacts ATP; the sequence is GRRRIGKT.

This is an uncharacterized protein from Methanocaldococcus jannaschii (strain ATCC 43067 / DSM 2661 / JAL-1 / JCM 10045 / NBRC 100440) (Methanococcus jannaschii).